An 88-amino-acid chain; its full sequence is Molybdopterin synthase sulfur carrier subunit (88 aa).

Glycine 88 bears the 1-thioglycine; alternate mark. Glycine 88 carries the post-translational modification Glycyl adenylate; alternate.

The protein belongs to the MoaD family. MOCS2A subfamily. In terms of assembly, heterotetramer; composed of 2 small (MOCS2A) and 2 large (MOCS2B) subunits. C-terminal thiocarboxylation occurs in 2 steps, it is first acyl-adenylated (-COAMP) via the hesA/moeB/thiF part of MOCS3, then thiocarboxylated (-COSH) via the rhodanese domain of MOCS3.

The protein resides in the cytoplasm. It localises to the cytosol. The protein operates within cofactor biosynthesis; molybdopterin biosynthesis. Its function is as follows. Acts as a sulfur carrier required for molybdopterin biosynthesis. Component of the molybdopterin synthase complex that catalyzes the conversion of precursor Z into molybdopterin by mediating the incorporation of 2 sulfur atoms into precursor Z to generate a dithiolene group. In the complex, serves as sulfur donor by being thiocarboxylated (-COSH) at its C-terminus by MOCS3. After interaction with MOCS2B, the sulfur is then transferred to precursor Z to form molybdopterin. This Mus musculus (Mouse) protein is Molybdopterin synthase sulfur carrier subunit.